The chain runs to 480 residues: Glycogen synthase 1 (480 aa).

K15 provides a ligand contact to ADP-alpha-D-glucose.

It belongs to the glycosyltransferase 1 family. Bacterial/plant glycogen synthase subfamily.

The catalysed reaction is [(1-&gt;4)-alpha-D-glucosyl](n) + ADP-alpha-D-glucose = [(1-&gt;4)-alpha-D-glucosyl](n+1) + ADP + H(+). Its pathway is glycan biosynthesis; glycogen biosynthesis. Its function is as follows. Synthesizes alpha-1,4-glucan chains using ADP-glucose. This chain is Glycogen synthase 1 (glgA1), found in Rhizobium radiobacter (Agrobacterium tumefaciens).